Here is a 261-residue protein sequence, read N- to C-terminus: Ribonuclease HII (261 aa).

Positions 71 to 259 (QYIAGVDEVG…VKEAKLHFES (189 aa)) constitute an RNase H type-2 domain. The a divalent metal cation site is built by D77, E78, and D169.

This sequence belongs to the RNase HII family. Mn(2+) serves as cofactor. Requires Mg(2+) as cofactor.

The protein resides in the cytoplasm. The catalysed reaction is Endonucleolytic cleavage to 5'-phosphomonoester.. Its function is as follows. Endonuclease that specifically degrades the RNA of RNA-DNA hybrids. The polypeptide is Ribonuclease HII (Listeria innocua serovar 6a (strain ATCC BAA-680 / CLIP 11262)).